Consider the following 673-residue polypeptide: Bifunctional polymyxin resistance protein ArnA (673 aa).

A formyltransferase ArnAFT region spans residues 1-311; the sequence is MKAIVFAYHD…EMGMVPQARL (311 aa). The active-site Proton donor; for formyltransferase activity is the H104. Residues R114 and 136–140 each bind (6R)-10-formyltetrahydrofolate; that span reads VSRAD. Residues 321–673 form a dehydrogenase ArnADH region; that stretch reads RRTRVLILGV…HTADATDTQG (353 aa). NAD(+)-binding positions include D354 and 375-376; that span reads DI. UDP-alpha-D-glucuronate-binding positions include A400, Y405, and 439–440; that span reads TS. Residue E441 is the Proton acceptor; for decarboxylase activity of the active site. Residues R467, N499, 533–542, and Y620 contribute to the UDP-alpha-D-glucuronate site; that span reads KLVDGGAQKR. R626 functions as the Proton donor; for decarboxylase activity in the catalytic mechanism.

The protein in the N-terminal section; belongs to the Fmt family. UDP-L-Ara4N formyltransferase subfamily. This sequence in the C-terminal section; belongs to the NAD(P)-dependent epimerase/dehydratase family. UDP-glucuronic acid decarboxylase subfamily. In terms of assembly, homohexamer, formed by a dimer of trimers.

It catalyses the reaction UDP-alpha-D-glucuronate + NAD(+) = UDP-beta-L-threo-pentopyranos-4-ulose + CO2 + NADH. The catalysed reaction is UDP-4-amino-4-deoxy-beta-L-arabinose + (6R)-10-formyltetrahydrofolate = UDP-4-deoxy-4-formamido-beta-L-arabinose + (6S)-5,6,7,8-tetrahydrofolate + H(+). It participates in nucleotide-sugar biosynthesis; UDP-4-deoxy-4-formamido-beta-L-arabinose biosynthesis; UDP-4-deoxy-4-formamido-beta-L-arabinose from UDP-alpha-D-glucuronate: step 1/3. The protein operates within nucleotide-sugar biosynthesis; UDP-4-deoxy-4-formamido-beta-L-arabinose biosynthesis; UDP-4-deoxy-4-formamido-beta-L-arabinose from UDP-alpha-D-glucuronate: step 3/3. It functions in the pathway bacterial outer membrane biogenesis; lipopolysaccharide biosynthesis. Its function is as follows. Bifunctional enzyme that catalyzes the oxidative decarboxylation of UDP-glucuronic acid (UDP-GlcUA) to UDP-4-keto-arabinose (UDP-Ara4O) and the addition of a formyl group to UDP-4-amino-4-deoxy-L-arabinose (UDP-L-Ara4N) to form UDP-L-4-formamido-arabinose (UDP-L-Ara4FN). The modified arabinose is attached to lipid A and is required for resistance to polymyxin and cationic antimicrobial peptides. The sequence is that of Bifunctional polymyxin resistance protein ArnA from Pectobacterium atrosepticum (strain SCRI 1043 / ATCC BAA-672) (Erwinia carotovora subsp. atroseptica).